A 652-amino-acid polypeptide reads, in one-letter code: Oligopeptide-binding protein AliB (652 aa).

Residues 1–24 (MKKSKSKYLTLAGLVLGTGVLLSA) form the signal peptide. C25 is lipidated: N-palmitoyl cysteine. C25 is lipidated: S-diacylglycerol cysteine.

The protein belongs to the bacterial solute-binding protein 5 family.

It is found in the cell membrane. Functionally, part of the binding-protein-dependent transport system for oligopeptides; probably an oligopeptide binding protein. The protein is Oligopeptide-binding protein AliB (aliB) of Streptococcus pneumoniae serotype 4 (strain ATCC BAA-334 / TIGR4).